The primary structure comprises 538 residues: Putative ABC1 protein At2g40090 (538 aa).

The N-terminal stretch at 1 to 26 is a signal peptide; it reads MAARSLWRTRTKLLVVGTALCGGSGA.

It belongs to the protein kinase superfamily. ADCK protein kinase family.

The chain is Putative ABC1 protein At2g40090 from Arabidopsis thaliana (Mouse-ear cress).